Consider the following 256-residue polypeptide: UPF0246 protein Maqu_2499 (256 aa).

Belongs to the UPF0246 family.

The protein is UPF0246 protein Maqu_2499 of Marinobacter nauticus (strain ATCC 700491 / DSM 11845 / VT8) (Marinobacter aquaeolei).